Here is a 107-residue protein sequence, read N- to C-terminus: Thioredoxin 1 (107 aa).

Positions 2–107 (SVAAAVTDAT…TLANTLDKHL (106 aa)) constitute a Thioredoxin domain. An intrachain disulfide couples cysteine 32 to cysteine 35.

The protein belongs to the thioredoxin family.

Functionally, participates in various redox reactions through the reversible oxidation of its active center dithiol to a disulfide and catalyzes dithiol-disulfide exchange reactions. This Synechococcus elongatus (strain ATCC 33912 / PCC 7942 / FACHB-805) (Anacystis nidulans R2) protein is Thioredoxin 1 (trxA).